The chain runs to 440 residues: Xylose isomerase (440 aa).

Mg(2+) is bound by residues aspartate 307 and aspartate 309.

The protein belongs to the xylose isomerase family. Homotetramer. Mg(2+) serves as cofactor.

The protein resides in the cytoplasm. It carries out the reaction alpha-D-xylose = alpha-D-xylulofuranose. The sequence is that of Xylose isomerase from Escherichia coli (strain K12 / MC4100 / BW2952).